Consider the following 256-residue polypeptide: Mediator of RNA polymerase II transcription subunit 7 (256 aa).

Disordered regions lie at residues 1–20 (MEEGGQQKGITAAFPPPPPF) and 208–244 (EAEGRNVSPNDEPVQTPESGPHNTKTQTSESQANGEQ). Positions 223-242 (TPESGPHNTKTQTSESQANG) are enriched in polar residues.

The protein belongs to the Mediator complex subunit 7 family. Component of the Mediator complex.

Its subcellular location is the nucleus. Functionally, component of the Mediator complex, a coactivator involved in the regulated transcription of nearly all RNA polymerase II-dependent genes. Mediator functions as a bridge to convey information from gene-specific regulatory proteins to the basal RNA polymerase II transcription machinery. Mediator is recruited to promoters by direct interactions with regulatory proteins and serves as a scaffold for the assembly of a functional preinitiation complex with RNA polymerase II and the general transcription factors. In Coccidioides immitis (strain RS) (Valley fever fungus), this protein is Mediator of RNA polymerase II transcription subunit 7 (MED7).